The sequence spans 214 residues: Adenylate kinase (214 aa).

Glycine 10–threonine 15 serves as a coordination point for ATP. The interval serine 30–valine 59 is NMP. Residues threonine 31, arginine 36, lysine 57–valine 59, glycine 85–arginine 88, and glutamine 92 each bind AMP. Residues glycine 122–aspartate 159 form an LID region. ATP contacts are provided by residues arginine 123 and valine 132–tyrosine 133. The AMP site is built by arginine 156 and arginine 167. Lysine 192 carries the N6-acetyllysine modification. Residue lysine 200 coordinates ATP.

It belongs to the adenylate kinase family. As to quaternary structure, monomer.

It localises to the cytoplasm. It catalyses the reaction AMP + ATP = 2 ADP. Its pathway is purine metabolism; AMP biosynthesis via salvage pathway; AMP from ADP: step 1/1. In terms of biological role, catalyzes the reversible transfer of the terminal phosphate group between ATP and AMP. Plays an important role in cellular energy homeostasis and in adenine nucleotide metabolism. This Escherichia coli O45:K1 (strain S88 / ExPEC) protein is Adenylate kinase.